The chain runs to 302 residues: uncharacterized protein (302 aa).

Helical transmembrane passes span 13–32 (GILLAISAYTMWGIAPIYFK), 42–64 (ILSHRVVWSFVLLAVLIHLGRRW), 77–96 (FWLLLVTALLVGGNWLIFIW), 106–125 (ASLGYYINPLLNVLLGMLFL), 132–150 (LQWFAVALAAIGVGIQLVV), 154–171 (VPIVAIALATSFGFYGLL), 183–202 (LFLETLFMLPAAAIYLIWLA), 217–239 (NLLLVCAGVVTTLPLLCFTGAAA), 246–265 (LGFFQYIGPSLMFLLAVLVY), and 275–297 (ITFAFIWSALVIFSVDGLKAGHA). In terms of domain architecture, EamA spans 22–149 (TMWGIAPIYF…AAIGVGIQLV (128 aa)).

It belongs to the EamA transporter family.

The protein localises to the cell membrane. This is an uncharacterized protein from Vibrio cholerae serotype O1 (strain ATCC 39315 / El Tor Inaba N16961).